A 335-amino-acid polypeptide reads, in one-letter code: Glycerol-3-phosphate dehydrogenase [NAD(P)+] (335 aa).

The NADPH site is built by Ser10, Phe11, Arg31, and Lys105. The sn-glycerol 3-phosphate site is built by Lys105, Gly136, and Ser138. An NADPH-binding site is contributed by Ala140. Residues Lys191, Asp244, Ser254, Arg255, and Asn256 each contribute to the sn-glycerol 3-phosphate site. Lys191 functions as the Proton acceptor in the catalytic mechanism. Arg255 serves as a coordination point for NADPH. Residues Val279 and Glu281 each coordinate NADPH.

This sequence belongs to the NAD-dependent glycerol-3-phosphate dehydrogenase family.

It is found in the cytoplasm. It catalyses the reaction sn-glycerol 3-phosphate + NAD(+) = dihydroxyacetone phosphate + NADH + H(+). The catalysed reaction is sn-glycerol 3-phosphate + NADP(+) = dihydroxyacetone phosphate + NADPH + H(+). It participates in membrane lipid metabolism; glycerophospholipid metabolism. Catalyzes the reduction of the glycolytic intermediate dihydroxyacetone phosphate (DHAP) to sn-glycerol 3-phosphate (G3P), the key precursor for phospholipid synthesis. The polypeptide is Glycerol-3-phosphate dehydrogenase [NAD(P)+] (Myxococcus xanthus (strain DK1622)).